The following is a 227-amino-acid chain: Cell wall mannoprotein CIS3 (227 aa).

The first 21 residues, 1–21, serve as a signal peptide directing secretion; the sequence is MQFKNVALAASVAALSATASA. A propeptide spanning residues 22 to 64 is cleaved from the precursor; that stretch reads EGYTPGEPWSTLTPTGSISCGAAEYTTTFGIAVQAITSSKAKR. One copy of the PIR1/2/3 repeat lies at 65–78; that stretch reads DVISQIGDGQVQAT. A glycan (O-linked (Man) serine) is linked at Ser68. Thr78 carries an O-linked (Man) threonine glycan. Positions 83 to 124 are enriched in low complexity; that stretch reads AQATDSQAQATTTATPTSSEKISSSASKTSTNATSSSCATPS. Residues 83–127 are disordered; that stretch reads AQATDSQAQATTTATPTSSEKISSSASKTSTNATSSSCATPSLKD. Residues Ser105, Ser106, Ser107, and Ser109 are each glycosylated (O-linked (Man) serine). O-linked (Man) threonine glycosylation occurs at Thr111. O-linked (Man) serine glycosylation is present at Ser112. An O-linked (Man) threonine glycan is attached at Thr113. N-linked (GlcNAc...) asparagine glycosylation is present at Asn114. Thr116 is a glycosylation site (O-linked (Man) threonine). O-linked (Man) serine glycosylation is found at Ser117 and Ser118.

Belongs to the PIR protein family. Post-translationally, covalently linked to beta-1,3-glucan of the inner cell wall layer via an alkali-sensitive ester linkage between the gamma-carboxyl group of glutamic acid, arising from Gln-74 within the PIR1/2/3 repeat, and hydroxyl groups of glucoses of beta-1,3-glucan chains. In terms of processing, extensively O-mannosylated. Also N-glycosylated.

The protein resides in the secreted. The protein localises to the cell wall. Functionally, component of the outer cell wall layer. Required for stability of the cell wall and for optimal growth. Required for resistance against several antifungal and cell wall-perturbing agents. The polypeptide is Cell wall mannoprotein CIS3 (CIS3) (Saccharomyces cerevisiae (strain ATCC 204508 / S288c) (Baker's yeast)).